The following is a 240-amino-acid chain: MRGIYLVGTDTEIGKTVISAALVYILCKAGYKTAYFKAALSDAEELNGKLIPGDTEFVCSLSGIQEDYEKLTPYIYKTAVSPYLASKIENKPIDIQVIKDKLTKLENEYGYVLCEGSGGVICPITDVDNKIYTLGNLIKDMKMDVILVCRAGLGTINHTVLTVSYLKNNGIEVKGIIVNQYEENRLCKDNINMIKKMTGIPILGVMPYINENKKNFIEELKYNACNIFKADEIAGLMKEV.

Position 12 to 17 (glutamate 12 to valine 17) interacts with ATP. Threonine 16 is a Mg(2+) binding site. Lysine 37 is a catalytic residue. Serine 41 is a binding site for substrate. ATP is bound by residues aspartate 54, glutamate 115–glycine 118, asparagine 179–glutamine 180, and proline 207–isoleucine 209. Mg(2+) is bound by residues aspartate 54 and glutamate 115.

Belongs to the dethiobiotin synthetase family. In terms of assembly, homodimer. Mg(2+) is required as a cofactor.

It is found in the cytoplasm. The enzyme catalyses (7R,8S)-7,8-diammoniononanoate + CO2 + ATP = (4R,5S)-dethiobiotin + ADP + phosphate + 3 H(+). It participates in cofactor biosynthesis; biotin biosynthesis; biotin from 7,8-diaminononanoate: step 1/2. Catalyzes a mechanistically unusual reaction, the ATP-dependent insertion of CO2 between the N7 and N8 nitrogen atoms of 7,8-diaminopelargonic acid (DAPA, also called 7,8-diammoniononanoate) to form a ureido ring. The protein is ATP-dependent dethiobiotin synthetase BioD of Clostridium acetobutylicum (strain ATCC 824 / DSM 792 / JCM 1419 / IAM 19013 / LMG 5710 / NBRC 13948 / NRRL B-527 / VKM B-1787 / 2291 / W).